The chain runs to 275 residues: Putative phosphoenolpyruvate synthase regulatory protein (275 aa).

Residue 153-160 coordinates ADP; sequence GVSRSGKT.

Belongs to the pyruvate, phosphate/water dikinase regulatory protein family. PSRP subfamily.

The catalysed reaction is [pyruvate, water dikinase] + ADP = [pyruvate, water dikinase]-phosphate + AMP + H(+). The enzyme catalyses [pyruvate, water dikinase]-phosphate + phosphate + H(+) = [pyruvate, water dikinase] + diphosphate. Functionally, bifunctional serine/threonine kinase and phosphorylase involved in the regulation of the phosphoenolpyruvate synthase (PEPS) by catalyzing its phosphorylation/dephosphorylation. The protein is Putative phosphoenolpyruvate synthase regulatory protein of Nitrosomonas eutropha (strain DSM 101675 / C91 / Nm57).